A 436-amino-acid chain; its full sequence is Nucleolar protein 4-like (436 aa).

The disordered stretch occupies residues 1–184; it reads MSDSTWMSAD…KMNDSEGMDP (184 aa). A compositionally biased stretch (low complexity) spans 41-61; the sequence is SESGSGNGSSTLNPSTSSSTQ. A Phosphoserine modification is found at serine 130. Over residues 160-169 the composition is skewed to acidic residues; sequence ADDDDDDHDD. A compositionally biased stretch (basic and acidic residues) spans 170-184; it reads HEDNDKMNDSEGMDP. Serine 295 is subject to Phosphoserine. Polar residues predominate over residues 351-366; that stretch reads QPPASLQTGNHSNGPT. The interval 351-400 is disordered; sequence QPPASLQTGNHSNGPTDLSMKGGASTTSTTPTPTPSSTSTSRPVPTAQLS. Residues 375-396 show a composition bias toward low complexity; that stretch reads STTSTTPTPTPSSTSTSRPVPT.

The polypeptide is Nucleolar protein 4-like (NOL4L) (Pongo abelii (Sumatran orangutan)).